Here is a 255-residue protein sequence, read N- to C-terminus: Syntaxin-6 (255 aa).

Serine 2 is modified (N-acetylserine). Serine 2 carries the post-translational modification Phosphoserine. The required for interaction with VPS51 stretch occupies residues serine 2–glutamine 168. Residues serine 2 to glutamine 234 lie on the Cytoplasmic side of the membrane. Residues glutamate 41–asparagine 74 adopt a coiled-coil conformation. Phosphoserine is present on residues serine 129 and serine 152. The region spanning glutamine 163–valine 225 is the t-SNARE coiled-coil homology domain. Residues tryptophan 235–leucine 255 traverse the membrane as a helical; Anchor for type IV membrane protein segment.

It belongs to the syntaxin family. Identified in a complex containing STX6, STX12, VAMP4 and VTI1A. Binds EEA1. Interacts with VPS45A. Interacts with MARCHF2; the interaction promotes MARCHF2-mediated ubiquitination and degradation of CFTR. Interacts with MARCHF3. Interacts with GOPC. Interacts with BLTP3B (via C-terminal coiled-coil domain). Interacts with BAIAP3; this interaction is increased in the presence of calcium. Interacts with VPS13B.

It localises to the golgi apparatus membrane. Its subcellular location is the golgi apparatus. The protein localises to the trans-Golgi network membrane. It is found in the recycling endosome membrane. Its function is as follows. SNARE promoting movement of transport vesicles to target membranes. Targets endosomes to the trans-Golgi network, and may therefore function in retrograde trafficking. Together with SNARE STX12, promotes movement of vesicles from endosomes to the cell membrane, and may therefore function in the endocytic recycling pathway. The chain is Syntaxin-6 (STX6) from Homo sapiens (Human).